A 151-amino-acid chain; its full sequence is Peptide deformylase (151 aa).

Fe cation contacts are provided by Cys88 and His130. The active site involves Glu131. Residue His134 participates in Fe cation binding.

It belongs to the polypeptide deformylase family. It depends on Fe(2+) as a cofactor.

It catalyses the reaction N-terminal N-formyl-L-methionyl-[peptide] + H2O = N-terminal L-methionyl-[peptide] + formate. In terms of biological role, removes the formyl group from the N-terminal Met of newly synthesized proteins. Requires at least a dipeptide for an efficient rate of reaction. N-terminal L-methionine is a prerequisite for activity but the enzyme has broad specificity at other positions. This is Peptide deformylase from Heliobacterium modesticaldum (strain ATCC 51547 / Ice1).